The following is a 600-amino-acid chain: Aspartate--tRNA(Asp/Asn) ligase (600 aa).

Glutamate 175 lines the L-aspartate pocket. The segment at 199 to 202 (QLFK) is aspartate. Arginine 221 serves as a coordination point for L-aspartate. ATP-binding positions include 221–223 (RDE) and glutamine 230. Histidine 453 provides a ligand contact to L-aspartate. Position 487 (glutamate 487) interacts with ATP. Arginine 494 is a binding site for L-aspartate. 539-542 (GWDR) serves as a coordination point for ATP. Residues 564-600 (GGVDPLTDAPAPITPLQRKESGIDAKPKAAENKPEEK) form a disordered region. A compositionally biased stretch (basic and acidic residues) spans 580-600 (QRKESGIDAKPKAAENKPEEK).

The protein belongs to the class-II aminoacyl-tRNA synthetase family. Type 1 subfamily. In terms of assembly, homodimer.

The protein resides in the cytoplasm. The catalysed reaction is tRNA(Asx) + L-aspartate + ATP = L-aspartyl-tRNA(Asx) + AMP + diphosphate. Functionally, aspartyl-tRNA synthetase with relaxed tRNA specificity since it is able to aspartylate not only its cognate tRNA(Asp) but also tRNA(Asn). Reaction proceeds in two steps: L-aspartate is first activated by ATP to form Asp-AMP and then transferred to the acceptor end of tRNA(Asp/Asn). The polypeptide is Aspartate--tRNA(Asp/Asn) ligase (Corynebacterium efficiens (strain DSM 44549 / YS-314 / AJ 12310 / JCM 11189 / NBRC 100395)).